The primary structure comprises 389 residues: Chalcone synthase 9 (389 aa).

The active site involves Cys-164.

It belongs to the thiolase-like superfamily. Chalcone/stilbene synthases family.

The enzyme catalyses (E)-4-coumaroyl-CoA + 3 malonyl-CoA + 3 H(+) = 2',4,4',6'-tetrahydroxychalcone + 3 CO2 + 4 CoA. The protein operates within secondary metabolite biosynthesis; flavonoid biosynthesis. Functionally, the primary product of this enzyme is 4,2',4',6'-tetrahydroxychalcone (also termed naringenin-chalcone or chalcone) which can under specific conditions spontaneously isomerize into naringenin. This Daucus carota (Wild carrot) protein is Chalcone synthase 9 (CHS9).